We begin with the raw amino-acid sequence, 123 residues long: Small ribosomal subunit protein uS12c (123 aa).

The protein belongs to the universal ribosomal protein uS12 family. As to quaternary structure, part of the 30S ribosomal subunit.

It localises to the plastid. The protein resides in the chloroplast. In terms of biological role, with S4 and S5 plays an important role in translational accuracy. Located at the interface of the 30S and 50S subunits. The protein is Small ribosomal subunit protein uS12c (rps12) of Anthoceros angustus (Hornwort).